Here is a 345-residue protein sequence, read N- to C-terminus: Eukaryotic translation initiation factor 3 subunit F (345 aa).

One can recognise an MPN domain in the interval valine 30–glycine 166. Positions glycine 308 to alanine 345 are disordered. Gly residues predominate over residues glutamine 318–glycine 331. Over residues threonine 335–alanine 345 the composition is skewed to basic and acidic residues.

This sequence belongs to the eIF-3 subunit F family. Component of the eukaryotic translation initiation factor 3 (eIF-3) complex.

Its subcellular location is the cytoplasm. Its function is as follows. Component of the eukaryotic translation initiation factor 3 (eIF-3) complex, which is involved in protein synthesis of a specialized repertoire of mRNAs and, together with other initiation factors, stimulates binding of mRNA and methionyl-tRNAi to the 40S ribosome. The eIF-3 complex specifically targets and initiates translation of a subset of mRNAs involved in cell proliferation. This chain is Eukaryotic translation initiation factor 3 subunit F, found in Aspergillus oryzae (strain ATCC 42149 / RIB 40) (Yellow koji mold).